The primary structure comprises 520 residues: Acetylcholine receptor subunit delta (520 aa).

An N-terminal signal peptide occupies residues 1–24 (MAGPVLTLGLLAALVVCALPGSWG). Residues 25 to 248 (LNEEQRLIQH…VTFYLIIRRK (224 aa)) are Extracellular-facing. N-linked (GlcNAc...) asparagine glycans are attached at residues N100, N167, and N193. The cysteines at positions 154 and 168 are disulfide-linked. 3 helical membrane passes run 249-273 (PLFY…VFYL), 281-299 (TSVA…LLIS), and 315-336 (FLLF…VLNI). At 337-474 (HFRTPSTHVL…WNQVARTVDR (138 aa)) the chain is on the cytoplasmic side. Position 393 is a phosphotyrosine; by Tyr-kinases (Y393). A helical transmembrane segment spans residues 475 to 493 (LCLFVVTPVMVVGTAWIFL).

The protein belongs to the ligand-gated ion channel (TC 1.A.9) family. Acetylcholine receptor (TC 1.A.9.1) subfamily. Delta/CHRND sub-subfamily. Pentamer of two alpha chains, and one each of the beta, delta, and gamma (in immature muscle) or epsilon (in mature muscle) chains. The muscle heteropentamer composed of alpha-1, beta-1, delta, epsilon subunits interacts with the alpha-conotoxin ImII.

It localises to the postsynaptic cell membrane. Its subcellular location is the cell membrane. The enzyme catalyses K(+)(in) = K(+)(out). It carries out the reaction Na(+)(in) = Na(+)(out). Its function is as follows. After binding acetylcholine, the AChR responds by an extensive change in conformation that affects all subunits and leads to opening of an ion-conducting channel across the plasma membrane. The sequence is that of Acetylcholine receptor subunit delta (Chrnd) from Mus musculus (Mouse).